The sequence spans 373 residues: Gibberellin 3-beta-dioxygenase 2 (373 aa).

The region spanning 203-304 (MTATVHLNWY…RVSLGYFLGP (102 aa)) is the Fe2OG dioxygenase domain. Y212 contacts 2-oxoglutarate. Residues H227, D229, and H285 each coordinate Fe cation. 2-oxoglutarate is bound by residues R295 and S297.

It belongs to the iron/ascorbate-dependent oxidoreductase family. It depends on L-ascorbate as a cofactor. The cofactor is Fe(2+). Highly expressed in elongating leaves. Expressed in unopened flowers. Expressed at low levels in leaf blades, shoots, rachis, stems and young panicles.

The enzyme catalyses gibberellin A20 + 2-oxoglutarate + O2 = gibberellin A1 + succinate + CO2. The protein operates within plant hormone biosynthesis; gibberellin biosynthesis. In terms of biological role, catalyzes the 3-beta-hydroxylation of the inactive gibberellin precursors, leading to the formation of bioactive gibberellins. In vitro, converts the precursors GA20, GA5, GA44 and GA9 to the corresponding 3-beta-hydroxylated active products GA1, GA3, GA38 and GA4, respectively. Involved in the production of bioactive GA for vegetative growth and development. Controls the elongation of the vegetative shoot and plant height by the regulation of active gibberellin levels. The protein is Gibberellin 3-beta-dioxygenase 2 of Oryza sativa subsp. japonica (Rice).